Here is an 89-residue protein sequence, read N- to C-terminus: uncharacterized protein (89 aa).

This is an uncharacterized protein from Mycobacterium bovis (strain ATCC BAA-935 / AF2122/97).